The primary structure comprises 608 residues: Alpha-glycerophosphate oxidase (608 aa).

21–49 (DLLIIGGGITGAGVALQAAASGLETGLIE) is an FAD binding site. The tract at residues 393 to 418 (SAVSKLESSTSEKHLDPSAVSRGSSL) is disordered.

The protein belongs to the FAD-dependent glycerol-3-phosphate dehydrogenase family. The cofactor is FAD.

It is found in the cell membrane. It catalyses the reaction sn-glycerol 3-phosphate + O2 = dihydroxyacetone phosphate + H2O2. Its pathway is membrane lipid metabolism; glycerophospholipid metabolism. In Streptococcus pneumoniae serotype 4 (strain ATCC BAA-334 / TIGR4), this protein is Alpha-glycerophosphate oxidase (glpO).